The sequence spans 382 residues: tRNA(Met) cytidine acetate ligase (382 aa).

ATP-binding positions include 9–22, G103, N152, and R177; that span reads VTEYNPFHNGHAYQ.

This sequence belongs to the TmcAL family.

The protein localises to the cytoplasm. It catalyses the reaction cytidine(34) in elongator tRNA(Met) + acetate + ATP = N(4)-acetylcytidine(34) in elongator tRNA(Met) + AMP + diphosphate. Catalyzes the formation of N(4)-acetylcytidine (ac(4)C) at the wobble position of elongator tRNA(Met), using acetate and ATP as substrates. First activates an acetate ion to form acetyladenylate (Ac-AMP) and then transfers the acetyl group to tRNA to form ac(4)C34. In Levilactobacillus brevis (strain ATCC 367 / BCRC 12310 / CIP 105137 / JCM 1170 / LMG 11437 / NCIMB 947 / NCTC 947) (Lactobacillus brevis), this protein is tRNA(Met) cytidine acetate ligase.